Here is a 536-residue protein sequence, read N- to C-terminus: C-22 sterol desaturase ERG5A (536 aa).

A helical membrane pass occupies residues 41–61; sequence VWTWVFTLVALCIAYDQIAYI. Residue cysteine 481 participates in heme binding.

The protein belongs to the cytochrome P450 family. It depends on heme as a cofactor.

The protein localises to the endoplasmic reticulum membrane. It catalyses the reaction 5-dehydroepisterol + NADPH + O2 + H(+) = ergosta-5,7,22,24(28)-tetraen-3beta-ol + NADP(+) + 2 H2O. Its pathway is steroid metabolism; ergosterol biosynthesis. In terms of biological role, C-22 sterol desaturase; part of the third module of ergosterol biosynthesis pathway that includes the late steps of the pathway. ERG5A and ERG5B convert 5-dehydroepisterol into ergosta-5,7,22,24(28)-tetraen-3beta-ol by forming the C-22(23) double bond in the sterol side chain. The third module or late pathway involves the ergosterol synthesis itself through consecutive reactions that mainly occur in the endoplasmic reticulum (ER) membrane. Firstly, the squalene synthase ERG9 catalyzes the condensation of 2 farnesyl pyrophosphate moieties to form squalene, which is the precursor of all steroids. Squalene synthase is crucial for balancing the incorporation of farnesyl diphosphate (FPP) into sterol and nonsterol isoprene synthesis. Secondly, squalene is converted into lanosterol by the consecutive action of the squalene epoxidase ERG1 and the lanosterol synthase ERG7. Then, the delta(24)-sterol C-methyltransferase ERG6 methylates lanosterol at C-24 to produce eburicol. Eburicol is the substrate of the sterol 14-alpha demethylase encoded by CYP51A, CYP51B and CYP51C, to yield 4,4,24-trimethyl ergosta-8,14,24(28)-trienol. CYP51B encodes the enzyme primarily responsible for sterol 14-alpha-demethylation, and plays an essential role in ascospore formation. CYP51A encodes an additional sterol 14-alpha-demethylase, induced on ergosterol depletion and responsible for the intrinsic variation in azole sensitivity. The third CYP51 isoform, CYP51C, does not encode a sterol 14-alpha-demethylase, but is required for full virulence on host wheat ears. The C-14 reductase ERG24 then reduces the C14=C15 double bond which leads to 4,4-dimethylfecosterol. A sequence of further demethylations at C-4, involving the C-4 demethylation complex containing the C-4 methylsterol oxidases ERG25, the sterol-4-alpha-carboxylate 3-dehydrogenase ERG26 and the 3-keto-steroid reductase ERG27, leads to the production of fecosterol via 4-methylfecosterol. ERG28 has a role as a scaffold to help anchor ERG25, ERG26 and ERG27 to the endoplasmic reticulum. The C-8 sterol isomerase ERG2 then catalyzes the reaction which results in unsaturation at C-7 in the B ring of sterols and thus converts fecosterol to episterol. The sterol-C5-desaturases ERG3A and ERG3BB then catalyze the introduction of a C-5 double bond in the B ring to produce 5-dehydroepisterol. The C-22 sterol desaturases ERG5A and ERG5B further convert 5-dehydroepisterol into ergosta-5,7,22,24(28)-tetraen-3beta-ol by forming the C-22(23) double bond in the sterol side chain. Finally, ergosta-5,7,22,24(28)-tetraen-3beta-ol is substrate of the C-24(28) sterol reductase ERG4 to produce ergosterol. In Gibberella zeae (strain ATCC MYA-4620 / CBS 123657 / FGSC 9075 / NRRL 31084 / PH-1) (Wheat head blight fungus), this protein is C-22 sterol desaturase ERG5A.